Here is a 311-residue protein sequence, read N- to C-terminus: Aspartate carbamoyltransferase catalytic subunit (311 aa).

Positions 55 and 56 each coordinate carbamoyl phosphate. K85 is a binding site for L-aspartate. Residues R106, H135, and Q138 each coordinate carbamoyl phosphate. 2 residues coordinate L-aspartate: R168 and R230. Residues L268 and P269 each coordinate carbamoyl phosphate.

This sequence belongs to the aspartate/ornithine carbamoyltransferase superfamily. ATCase family. In terms of assembly, heterododecamer (2C3:3R2) of six catalytic PyrB chains organized as two trimers (C3), and six regulatory PyrI chains organized as three dimers (R2).

It catalyses the reaction carbamoyl phosphate + L-aspartate = N-carbamoyl-L-aspartate + phosphate + H(+). Its pathway is pyrimidine metabolism; UMP biosynthesis via de novo pathway; (S)-dihydroorotate from bicarbonate: step 2/3. Catalyzes the condensation of carbamoyl phosphate and aspartate to form carbamoyl aspartate and inorganic phosphate, the committed step in the de novo pyrimidine nucleotide biosynthesis pathway. This is Aspartate carbamoyltransferase catalytic subunit from Klebsiella pneumoniae subsp. pneumoniae (strain ATCC 700721 / MGH 78578).